A 380-amino-acid polypeptide reads, in one-letter code: Queuine tRNA-ribosyltransferase (380 aa).

The active-site Proton acceptor is the Asp96. Substrate contacts are provided by residues 96-100 (DSGGF), Asp150, Gln193, and Gly220. Residues 251 to 257 (GVGAPDS) are RNA binding. Catalysis depends on Asp270, which acts as the Nucleophile. Residues 275–279 (TRIAR) are RNA binding; important for wobble base 34 recognition. Residues Cys308, Cys310, Cys313, and His339 each contribute to the Zn(2+) site.

It belongs to the queuine tRNA-ribosyltransferase family. Homodimer. Within each dimer, one monomer is responsible for RNA recognition and catalysis, while the other monomer binds to the replacement base PreQ1. Zn(2+) serves as cofactor.

The enzyme catalyses 7-aminomethyl-7-carbaguanine + guanosine(34) in tRNA = 7-aminomethyl-7-carbaguanosine(34) in tRNA + guanine. The protein operates within tRNA modification; tRNA-queuosine biosynthesis. Catalyzes the base-exchange of a guanine (G) residue with the queuine precursor 7-aminomethyl-7-deazaguanine (PreQ1) at position 34 (anticodon wobble position) in tRNAs with GU(N) anticodons (tRNA-Asp, -Asn, -His and -Tyr). Catalysis occurs through a double-displacement mechanism. The nucleophile active site attacks the C1' of nucleotide 34 to detach the guanine base from the RNA, forming a covalent enzyme-RNA intermediate. The proton acceptor active site deprotonates the incoming PreQ1, allowing a nucleophilic attack on the C1' of the ribose to form the product. After dissociation, two additional enzymatic reactions on the tRNA convert PreQ1 to queuine (Q), resulting in the hypermodified nucleoside queuosine (7-(((4,5-cis-dihydroxy-2-cyclopenten-1-yl)amino)methyl)-7-deazaguanosine). The sequence is that of Queuine tRNA-ribosyltransferase from Streptococcus equi subsp. equi (strain 4047).